We begin with the raw amino-acid sequence, 230 residues long: Fibrillarin-like rRNA/tRNA 2'-O-methyltransferase (230 aa).

Residues threonine 89–threonine 90, glutamate 107–valine 108, aspartate 132–alanine 133, and aspartate 152–glutamine 155 contribute to the S-adenosyl-L-methionine site.

This sequence belongs to the methyltransferase superfamily. Fibrillarin family. Interacts with nop5. Component of box C/D small ribonucleoprotein (sRNP) particles that contain rpl7ae, FlpA and nop5, plus a guide RNA.

Functionally, involved in pre-rRNA and tRNA processing. Utilizes the methyl donor S-adenosyl-L-methionine to catalyze the site-specific 2'-hydroxyl methylation of ribose moieties in rRNA and tRNA. Site specificity is provided by a guide RNA that base pairs with the substrate. Methylation occurs at a characteristic distance from the sequence involved in base pairing with the guide RNA. The sequence is that of Fibrillarin-like rRNA/tRNA 2'-O-methyltransferase from Thermoplasma acidophilum (strain ATCC 25905 / DSM 1728 / JCM 9062 / NBRC 15155 / AMRC-C165).